A 126-amino-acid polypeptide reads, in one-letter code: Small ribosomal subunit protein bS6 (126 aa).

Residues L104–A126 form a disordered region. Over residues A105–F120 the composition is skewed to basic and acidic residues.

It belongs to the bacterial ribosomal protein bS6 family.

Binds together with bS18 to 16S ribosomal RNA. The sequence is that of Small ribosomal subunit protein bS6 from Caulobacter vibrioides (strain ATCC 19089 / CIP 103742 / CB 15) (Caulobacter crescentus).